A 196-amino-acid chain; its full sequence is dTTP/UTP pyrophosphatase (196 aa).

The Proton acceptor role is filled by Asp78.

The protein belongs to the Maf family. YhdE subfamily. Requires a divalent metal cation as cofactor.

It localises to the cytoplasm. The catalysed reaction is dTTP + H2O = dTMP + diphosphate + H(+). It catalyses the reaction UTP + H2O = UMP + diphosphate + H(+). Its function is as follows. Nucleoside triphosphate pyrophosphatase that hydrolyzes dTTP and UTP. May have a dual role in cell division arrest and in preventing the incorporation of modified nucleotides into cellular nucleic acids. The polypeptide is dTTP/UTP pyrophosphatase (Photobacterium profundum (strain SS9)).